A 103-amino-acid chain; its full sequence is Small ribosomal subunit protein uS10 (103 aa).

It belongs to the universal ribosomal protein uS10 family. As to quaternary structure, part of the 30S ribosomal subunit.

Functionally, involved in the binding of tRNA to the ribosomes. The sequence is that of Small ribosomal subunit protein uS10 from Laribacter hongkongensis (strain HLHK9).